Reading from the N-terminus, the 152-residue chain is Xanthine-guanine phosphoribosyltransferase (152 aa).

5-phospho-alpha-D-ribose 1-diphosphate contacts are provided by residues 37-38 (RG), arginine 69, and 88-96 (DDLVDTGGT). Arginine 69 contacts GMP. Position 89 (aspartate 89) interacts with Mg(2+). Residues aspartate 92 and isoleucine 135 each contribute to the guanine site. Residues aspartate 92 and isoleucine 135 each coordinate xanthine. GMP-binding positions include 92-96 (DTGGT) and 134-135 (WI).

It belongs to the purine/pyrimidine phosphoribosyltransferase family. XGPT subfamily. Homotetramer. Mg(2+) is required as a cofactor.

It localises to the cell inner membrane. It carries out the reaction GMP + diphosphate = guanine + 5-phospho-alpha-D-ribose 1-diphosphate. It catalyses the reaction XMP + diphosphate = xanthine + 5-phospho-alpha-D-ribose 1-diphosphate. The enzyme catalyses IMP + diphosphate = hypoxanthine + 5-phospho-alpha-D-ribose 1-diphosphate. It participates in purine metabolism; GMP biosynthesis via salvage pathway; GMP from guanine: step 1/1. It functions in the pathway purine metabolism; XMP biosynthesis via salvage pathway; XMP from xanthine: step 1/1. Purine salvage pathway enzyme that catalyzes the transfer of the ribosyl-5-phosphate group from 5-phospho-alpha-D-ribose 1-diphosphate (PRPP) to the N9 position of the 6-oxopurines guanine and xanthine to form the corresponding ribonucleotides GMP (guanosine 5'-monophosphate) and XMP (xanthosine 5'-monophosphate), with the release of PPi. To a lesser extent, also acts on hypoxanthine. In Escherichia coli O7:K1 (strain IAI39 / ExPEC), this protein is Xanthine-guanine phosphoribosyltransferase.